The following is a 138-amino-acid chain: Large ribosomal subunit protein uL16c (138 aa).

The disordered stretch occupies residues 1–21 (MLSPQKTKFRKQHRGRMKGVS). Over residues 7–21 (TKFRKQHRGRMKGVS) the composition is skewed to basic residues.

This sequence belongs to the universal ribosomal protein uL16 family. As to quaternary structure, part of the 50S ribosomal subunit.

The protein localises to the plastid. It localises to the chloroplast. In Cycas taitungensis (Prince sago), this protein is Large ribosomal subunit protein uL16c.